Consider the following 156-residue polypeptide: Isotocin-neurophysin IT 2 (156 aa).

Residues 1–19 form the signal peptide; the sequence is MTGAAVSVCLLYALSVCSA. A disulfide bridge links Cys20 with Cys25. Gly28 is modified (glycine amide). Intrachain disulfides connect Cys41/Cys85, Cys44/Cys58, Cys52/Cys75, Cys59/Cys65, Cys92/Cys105, Cys99/Cys117, and Cys106/Cys111.

This sequence belongs to the vasopressin/oxytocin family. Post-translationally, seven disulfide bonds are present in neurophysin.

It localises to the secreted. Its function is as follows. Isotocin causes contraction of smooth muscles. This Oncorhynchus keta (Chum salmon) protein is Isotocin-neurophysin IT 2.